A 707-amino-acid chain; its full sequence is DNA ligase (707 aa).

Positions Met-1–Ala-23 are disordered. Residues Asp-53–Asp-57, Ser-103–Leu-104, and Glu-133 contribute to the NAD(+) site. Lys-135 acts as the N6-AMP-lysine intermediate in catalysis. NAD(+) is bound by residues Arg-156, Glu-196, Lys-315, and Lys-339. The Zn(2+) site is built by Cys-433, Cys-436, Cys-452, and Cys-458. Residues Ser-622–Ser-707 form the BRCT domain.

The protein belongs to the NAD-dependent DNA ligase family. LigA subfamily. Mg(2+) serves as cofactor. Mn(2+) is required as a cofactor.

The catalysed reaction is NAD(+) + (deoxyribonucleotide)n-3'-hydroxyl + 5'-phospho-(deoxyribonucleotide)m = (deoxyribonucleotide)n+m + AMP + beta-nicotinamide D-nucleotide.. Functionally, DNA ligase that catalyzes the formation of phosphodiester linkages between 5'-phosphoryl and 3'-hydroxyl groups in double-stranded DNA using NAD as a coenzyme and as the energy source for the reaction. It is essential for DNA replication and repair of damaged DNA. The polypeptide is DNA ligase (Mycolicibacterium vanbaalenii (strain DSM 7251 / JCM 13017 / BCRC 16820 / KCTC 9966 / NRRL B-24157 / PYR-1) (Mycobacterium vanbaalenii)).